The primary structure comprises 34 residues: Leader peptide SpeFL (34 aa).

Positions 1 to 13 are sensor domain; that stretch reads MENNSRTMPHIRR. Residues 10-16 carry the Ornithine recognition loop motif; sequence HIRRTTH. Arg-13 lines the L-ornithine pocket. An effector domain region spans residues 14 to 34; sequence TTHIMKFAHRNSFDFHFFNAR.

Belongs to the speF operon leader peptide family. Binds ornithine in stalled 70S ribosomes, blocking the upper two-thirds of the exit tunnel. Contacts 23S rRNA and ribosomal proteins L4 and L22.

A small protein (arrest peptide) encoded upstream of inducible ornithine carboxylase gene (speF) that controls expression of downstream genes (speF and patE) by nascent chain-translational arrest and transcriptional attenuation. In the presence of ornithine a toeprint due to ribosomal arrest can be seen on the speFL transcript. Only L-ornithine (not other tested amino acids) has this effect. It is thought that in the presence of ornithine, ribosomal stalling on speFL prevents binding of Rho transcription termination factor to a downstream rut site allowing transcription of the operon. In the absence of ornithine, ribosomes terminate translation and are recycled, exposing the rut site allowing Rho to bind and prematurely terminate transcription. The presence of a pair of rare Arg codons could slow down translation to prevent polysome accumulation and to expose the rut site to Rho. In Escherichia coli (strain K12), this protein is Leader peptide SpeFL.